Here is a 107-residue protein sequence, read N- to C-terminus: Parvalbumin beta 2 (107 aa).

Ser-1 is modified (N-acetylserine). 2 consecutive EF-hand domains span residues Xaa-37 to Ser-72 and Asp-89 to Gln-107. Residues Asp-50, Asp-52, Ser-54, Phe-56, Glu-58, Glu-61, Asp-89, Asp-91, Asp-93, Met-95, and Glu-100 each coordinate Ca(2+).

It belongs to the parvalbumin family.

In terms of biological role, in muscle, parvalbumin is thought to be involved in relaxation after contraction. It binds two calcium ions. The chain is Parvalbumin beta 2 from Oncorhynchus mykiss (Rainbow trout).